Reading from the N-terminus, the 622-residue chain is Chromosomal replication initiator protein DnaA (622 aa).

The domain I, interacts with DnaA modulators stretch occupies residues 1–99 (MADVPADLAA…SAGEPPAPPA (99 aa)). Residues 88–282 (DDSAGEPPAP…APGPGEPHAR (195 aa)) form a disordered region. A domain II region spans residues 100-281 (PPMHQSHQGP…PAPGPGEPHA (182 aa)). Composition is skewed to basic and acidic residues over residues 118-137 (QRDDAPRGDTYDGYGHRPSD) and 176-210 (GYQDREQPPGEPYRESEAYQRESEQYREQPPEPWR). A compositionally biased stretch (gly residues) spans 250–262 (PGGHGPGRTGGSV). Residues 282–498 (RLNPKYLFDT…GALIRVTAFA (217 aa)) form a domain III, AAA+ region region. The ATP site is built by Gly326, Gly328, Lys329, and Thr330. Positions 499 to 622 (SLNRQPVDLG…TELTNRIKNG (124 aa)) are domain IV, binds dsDNA.

The protein belongs to the DnaA family. In terms of assembly, oligomerizes as a right-handed, spiral filament on DNA at oriC.

Its subcellular location is the cytoplasm. Functionally, plays an essential role in the initiation and regulation of chromosomal replication. ATP-DnaA binds to the origin of replication (oriC) to initiate formation of the DNA replication initiation complex once per cell cycle. Binds the DnaA box (a 9 base pair repeat at the origin) and separates the double-stranded (ds)DNA. Forms a right-handed helical filament on oriC DNA; dsDNA binds to the exterior of the filament while single-stranded (ss)DNA is stabiized in the filament's interior. The ATP-DnaA-oriC complex binds and stabilizes one strand of the AT-rich DNA unwinding element (DUE), permitting loading of DNA polymerase. After initiation quickly degrades to an ADP-DnaA complex that is not apt for DNA replication. Binds acidic phospholipids. This is Chromosomal replication initiator protein DnaA from Streptomyces griseus subsp. griseus (strain JCM 4626 / CBS 651.72 / NBRC 13350 / KCC S-0626 / ISP 5235).